We begin with the raw amino-acid sequence, 224 residues long: ATP-dependent dethiobiotin synthetase BioD (224 aa).

An ATP-binding site is contributed by 14-19 (GIGKTV). Residue Thr-18 participates in Mg(2+) binding. Residue Lys-39 is part of the active site. Ser-43 serves as a coordination point for substrate. ATP is bound by residues Asp-56, 117 to 120 (EGVG), and 177 to 178 (NE). Asp-56 and Glu-117 together coordinate Mg(2+).

The protein belongs to the dethiobiotin synthetase family. In terms of assembly, homodimer. The cofactor is Mg(2+).

The protein localises to the cytoplasm. The enzyme catalyses (7R,8S)-7,8-diammoniononanoate + CO2 + ATP = (4R,5S)-dethiobiotin + ADP + phosphate + 3 H(+). The protein operates within cofactor biosynthesis; biotin biosynthesis; biotin from 7,8-diaminononanoate: step 1/2. In terms of biological role, catalyzes a mechanistically unusual reaction, the ATP-dependent insertion of CO2 between the N7 and N8 nitrogen atoms of 7,8-diaminopelargonic acid (DAPA, also called 7,8-diammoniononanoate) to form a ureido ring. The sequence is that of ATP-dependent dethiobiotin synthetase BioD from Xanthomonas campestris pv. campestris (strain B100).